A 142-amino-acid polypeptide reads, in one-letter code: Galactose-binding lectin (142 aa).

Residues 1–141 form the Galectin domain; sequence TYAEVESFGV…GTDIWDLLLL (141 aa).

In terms of assembly, homotetramer.

With respect to regulation, cytotoxic activity against L.infantum promastigotes is completely inhibited by D-galactose. Inhibition activity against biofilm formation by S.aureus and S.epidermidis is inhibited by alpha-lactose. Hemagglutination activity is inhibited by alpha-lactose (MIC=100 mM), beta-lactose (MIC=100 mM), lactulose (MIC=100 mM), bovine submaxillary mucin (BSM) (MIC=32 ug/ml), fetuin (MIC=16 ug/ml), porcine stomach mucin (PSM) type 2 (MIC=8 ug/ml) and PSM type 3 (MIC=8 ug/ml). Functionally, galactose-binding lectin. Displays antibacterial and hemagglutinin activity. Inhibits the growth of L.infantum promastigotes by damaging their membrane integrity and inducing cell apoptosis via the production of reactive oxygen species (ROS). Inhibition of L.infantum promastigotes appears to increase with time (MIC=1.2 uM/ml after 24 hours, MIC=0.9 uM/ml after 48 hours and MIC=0.6 uM/ml after 72 hours). Agglutinates Gram-negative and Gram-positive bacteria including E.coli, S.aureus and S.epidermidis, and inhibits biofilm formation by S.aureus and S.epidermidis. Displays hemagglutination activity towards all types of human erythrocytes (O, A and B) and rabbit erythrocytes. The protein is Galactose-binding lectin of Chondrilla caribensis (Chicken liver sponge).